Here is a 233-residue protein sequence, read N- to C-terminus: ATP synthase subunit a (233 aa).

Transmembrane regions (helical) follow at residues 29-49, 86-106, 118-135, 188-208, and 209-229; these read FKHV…GLIV, VFPL…LGLV, TNAA…YQGL, VLFF…LFLL, and GKVL…KGAF.

This sequence belongs to the ATPase A chain family. As to quaternary structure, F-type ATPases have 2 components, CF(1) - the catalytic core - and CF(0) - the membrane proton channel. CF(1) has five subunits: alpha(3), beta(3), gamma(1), delta(1), epsilon(1). CF(0) has three main subunits: a(1), b(2) and c(9-12). The alpha and beta chains form an alternating ring which encloses part of the gamma chain. CF(1) is attached to CF(0) by a central stalk formed by the gamma and epsilon chains, while a peripheral stalk is formed by the delta and b chains.

Its subcellular location is the cell inner membrane. Functionally, key component of the proton channel; it plays a direct role in the translocation of protons across the membrane. This is ATP synthase subunit a from Nitratidesulfovibrio vulgaris (strain ATCC 29579 / DSM 644 / CCUG 34227 / NCIMB 8303 / VKM B-1760 / Hildenborough) (Desulfovibrio vulgaris).